A 562-amino-acid chain; its full sequence is Adenylate kinase isoenzyme 5 (562 aa).

Adenylate kinase regions lie at residues 133-316 (KIIL…MAVD) and 377-559 (KIIF…TAID). 142-147 (GSGKGT) contributes to the ATP binding site. Residues 162–193 (SVGELLRKKIHSTSSNRKWSLIAKIITTGELA) are NMP 1. AMP contacts are provided by residues Arg168, 191 to 193 (ELA), 219 to 222 (GFPR), and Gln226. Residues 256 to 266 (KRAEQQGRPDD) form an LID 1 region. Position 257 (Arg257) interacts with ATP. AMP is bound by residues Arg263 and Arg274. ATP is bound at residue 386-391 (GSGKGT). The interval 406–435 (STGELLREELASESERSKLIRDIMERGDLV) is NMP 2. Residues Thr407, Arg412, 433 to 435 (DLV), 462 to 465 (GYPR), and Gln469 contribute to the AMP site. Positions 499-509 (QRSRSSLPVDD) are LID 2. Arg500 is a binding site for ATP. Arg517 is a binding site for AMP. ATP is bound at residue Gly545.

Belongs to the adenylate kinase family. In terms of assembly, monomer. Interacts with YWHAZ. In terms of tissue distribution, brain specific.

The protein localises to the cytoplasm. It catalyses the reaction AMP + ATP = 2 ADP. The enzyme catalyses a 2'-deoxyribonucleoside 5'-diphosphate + ATP = a 2'-deoxyribonucleoside 5'-triphosphate + ADP. The catalysed reaction is a ribonucleoside 5'-diphosphate + ATP = a ribonucleoside 5'-triphosphate + ADP. In terms of biological role, nucleoside monophosphate (NMP) kinase that catalyzes the reversible transfer of the terminal phosphate group between nucleoside triphosphates and monophosphates. Active on AMP and dAMP with ATP as a donor. When GTP is used as phosphate donor, the enzyme phosphorylates AMP, CMP, and to a small extent dCMP. Also displays broad nucleoside diphosphate kinase activity. This chain is Adenylate kinase isoenzyme 5 (AK5), found in Homo sapiens (Human).